An 893-amino-acid chain; its full sequence is Protein kintoun (893 aa).

Disordered regions lie at residues Lys-211 to Met-243, Leu-372 to Gly-395, Glu-587 to Asp-719, Gln-781 to Ala-821, and Pro-834 to Met-893. The span at Thr-214–Glu-232 shows a compositional bias: basic and acidic residues. Ser-377 is modified (phosphoserine). Residues Gln-594–Gln-603 are compositionally biased toward acidic residues. The segment covering His-609 to Arg-626 has biased composition (basic residues). Positions Gln-640–Gln-651 are enriched in low complexity. 2 stretches are compositionally biased toward polar residues: residues Glu-656–Ser-667 and Phe-684–Gln-694. Positions Ser-709–Asp-719 are enriched in low complexity. Positions Gln-781 to Gln-797 are enriched in basic residues. Phosphoserine is present on Ser-801. Residues Asn-836–Asn-848 show a composition bias toward low complexity. Basic and acidic residues predominate over residues Asn-865 to Ala-877. Residues Glu-884–Met-893 show a composition bias toward acidic residues.

It belongs to the PIH1 family. Kintoun subfamily. As to quaternary structure, interacts with Pp1alpha-96A, Pp1-87B, Pp1-13C and flw.

It is found in the cytoplasm. Functionally, required for cytoplasmic pre-assembly of axonemal dyneins, thereby playing a central role in motility in cilia and flagella. Involved in pre-assembly of dynein arm complexes in the cytoplasm before intraflagellar transport loads them for the ciliary compartment. This Drosophila grimshawi (Hawaiian fruit fly) protein is Protein kintoun.